Consider the following 233-residue polypeptide: Maternal B9.15 protein (233 aa).

The segment at K135 to N165 is disordered.

It belongs to the BTG family.

The chain is Maternal B9.15 protein from Xenopus laevis (African clawed frog).